Reading from the N-terminus, the 189-residue chain is GTPase NRas (189 aa).

GTP contacts are provided by residues G10 to A18 and V29 to D30. The Effector region signature appears at Y32–Y40. D57–Q61 contacts GTP. S89 bears the Phosphoserine mark. GTP is bound at residue N116–D119. The interval Y166 to P185 is hypervariable region. K170 is covalently cross-linked (Glycyl lysine isopeptide (Lys-Gly) (interchain with G-Cter in ubiquitin)). The S-palmitoyl cysteine moiety is linked to residue C181. Residue C186 is the site of S-farnesyl cysteine attachment. Positions V187–M189 are cleaved as a propeptide — removed in mature form.

It belongs to the small GTPase superfamily. Ras family. In terms of assembly, interacts (active GTP-bound form preferentially) with RGS14. Interacts (active GTP-bound form) with RASSF7. Interacts (active GTP-bound form) with both SHOC2 and PP1c (all isoforms) to form a tertiary complex; SHOC2 and PP1c preferably bind M-Ras/MRAS, but they also bind K-Ras/KRAS, N-Ras/NRAS and H-Ras/HRAS. Post-translationally, palmitoylated by the ZDHHC9-GOLGA7 complex. Depalmitoylated by ABHD17A, ABHD17B and ABHD17C. A continuous cycle of de- and re-palmitoylation regulates rapid exchange between plasma membrane and Golgi. In terms of processing, acetylation at Lys-104 prevents interaction with guanine nucleotide exchange factors (GEFs). Ubiquitinated by the BCR(LZTR1) E3 ubiquitin ligase complex at Lys-170 in a non-degradative manner, leading to inhibit Ras signaling by decreasing Ras association with membranes. Post-translationally, phosphorylation at Ser-89 enhances NRAS association with its downstream effectors.

The protein resides in the cell membrane. Its subcellular location is the golgi apparatus membrane. The enzyme catalyses GTP + H2O = GDP + phosphate + H(+). With respect to regulation, alternates between an inactive form bound to GDP and an active form bound to GTP. Activated by a guanine nucleotide-exchange factor (GEF) and inactivated by a GTPase-activating protein (GAP). Its function is as follows. Ras proteins bind GDP/GTP and possess intrinsic GTPase activity. The sequence is that of GTPase NRas (Nras) from Rattus norvegicus (Rat).